Here is a 333-residue protein sequence, read N- to C-terminus: MKFRNLFFAAVAGSAVAAPLAKEQKKRDSVFQWIGANESGAEFGENNLPGVWGTDYIFPDVSAITTLIDKGMNIFRIQFKMERLVPDSMTGAYDEAYLQNLTTVVNAVTDAGVHAILDPHNYGRFNGEIMSTPSDFQTFWKNLAGQFQSNSLVIFDTNNEYHDMDQELVLNLNQAAIDGIREAGATEQYIFVEGNSYTGAWTWTDVNDNMKNLEDPQDKIVYQMHQYLDSDGSGTSETCVSGTIGQERVTSATQWLKDNKKVGIIGEFAGGNNDQCKTAVKGMLDYLAENTDVWKGALWWAAGPWWGDYMYSLEPPNGVAFTGMLDVLQAYLG.

The N-terminal stretch at 1 to 17 (MKFRNLFFAAVAGSAVA) is a signal peptide. 2 N-linked (GlcNAc...) asparagine glycosylation sites follow: Asn37 and Asn100. Glu160 functions as the Proton donor in the catalytic mechanism. The Nucleophile role is filled by Glu267.

The protein belongs to the glycosyl hydrolase 5 (cellulase A) family.

Its subcellular location is the secreted. It catalyses the reaction Endohydrolysis of (1-&gt;4)-beta-D-glucosidic linkages in cellulose, lichenin and cereal beta-D-glucans.. Functionally, has endoglucanase activity on substrates containing beta-1,4 glycosidic bonds, like in carboxymethylcellulose (CMC), hydroxyethylcellulose (HEC) and beta-glucan. Involved in the degradation of complex natural cellulosic substrates. This Aspergillus oryzae (strain ATCC 42149 / RIB 40) (Yellow koji mold) protein is Probable endo-beta-1,4-glucanase B (eglB).